The chain runs to 666 residues: Probable potassium transport system protein Kup (666 aa).

12 helical membrane passes run 16-36, 58-78, 100-120, 141-161, 165-185, 221-241, 253-273, 294-314, 343-363, 373-393, 399-419, and 424-444; these read GFIIALGIVYGDIGTSPLYTM, ISLIIWTLTLITTIKYVLIAL, PWLIIPAMIGGATLLSDGALT, IYQNQTNVIITTLVILIVLFG, FGTGFIGKIFGPVMFIWFSFL, IFILGSIFLATTGAEALYSDL, WPFVKVCIVLSYCGQAAWILA, VYLVSLATLAAIIASQALISG, LYIPVINWILFAVTSCTVLYF, YGLAITITMLMTTILLNYYLI, PFLAHLVMTFFALVEFIFFWA, and FMHGGYVVVILALAIVFVMFI.

This sequence belongs to the HAK/KUP transporter (TC 2.A.72) family.

The protein resides in the cell membrane. It catalyses the reaction K(+)(in) + H(+)(in) = K(+)(out) + H(+)(out). In terms of biological role, transport of potassium into the cell. Likely operates as a K(+):H(+) symporter. This chain is Probable potassium transport system protein Kup, found in Streptococcus pyogenes serotype M6 (strain ATCC BAA-946 / MGAS10394).